The chain runs to 218 residues: Cytidylate kinase (218 aa).

11 to 19 serves as a coordination point for ATP; that stretch reads GPGASGKGT.

It belongs to the cytidylate kinase family. Type 1 subfamily.

It is found in the cytoplasm. It catalyses the reaction CMP + ATP = CDP + ADP. The enzyme catalyses dCMP + ATP = dCDP + ADP. This is Cytidylate kinase from Neisseria meningitidis serogroup B (strain ATCC BAA-335 / MC58).